A 343-amino-acid polypeptide reads, in one-letter code: Small ribosomal subunit biogenesis GTPase RsgA (343 aa).

The 160-residue stretch at 116 to 275 folds into the CP-type G domain; it reads RGQLKPVAAN…LIDSPGIREF (160 aa). Residues 163 to 166 and 217 to 225 contribute to the GTP site; these read NKAD and GQSGVGKSS. Zn(2+)-binding residues include C299, C304, H306, and C312.

It belongs to the TRAFAC class YlqF/YawG GTPase family. RsgA subfamily. In terms of assembly, monomer. Associates with 30S ribosomal subunit, binds 16S rRNA. Zn(2+) serves as cofactor.

It localises to the cytoplasm. Functionally, one of several proteins that assist in the late maturation steps of the functional core of the 30S ribosomal subunit. Helps release RbfA from mature subunits. May play a role in the assembly of ribosomal proteins into the subunit. Circularly permuted GTPase that catalyzes slow GTP hydrolysis, GTPase activity is stimulated by the 30S ribosomal subunit. This is Small ribosomal subunit biogenesis GTPase RsgA from Azotobacter vinelandii (strain DJ / ATCC BAA-1303).